A 341-amino-acid chain; its full sequence is Limbic system-associated membrane protein (341 aa).

An N-terminal signal peptide occupies residues 1–28 (MVGRVQPDRKQLPLVLLRLLCLLPTGLP). 3 Ig-like domains span residues 29–122 (VRSV…PKTS), 132–214 (PKIS…VKVT), and 219–304 (PTIT…ASLV). Residues Asn-40 and Asn-66 are each glycosylated (N-linked (GlcNAc...) asparagine). A disulfide bond links Cys-53 and Cys-111. Tyr-94 carries the post-translational modification Phosphotyrosine. Asn-136 and Asn-148 each carry an N-linked (GlcNAc...) asparagine glycan. 2 disulfides stabilise this stretch: Cys-153–Cys-197 and Cys-239–Cys-290. N-linked (GlcNAc...) asparagine glycosylation is found at Asn-279, Asn-287, and Asn-300.

Belongs to the immunoglobulin superfamily. IgLON family.

Its subcellular location is the cell membrane. Mediates selective neuronal growth and axon targeting. Contributes to the guidance of developing axons and remodeling of mature circuits in the limbic system. Essential for normal growth of the hippocampal mossy fiber projection. The sequence is that of Limbic system-associated membrane protein (Lsamp) from Mus musculus (Mouse).